Reading from the N-terminus, the 430-residue chain is Adenylosuccinate synthetase (430 aa).

Residues 12 to 18 and 40 to 42 contribute to the GTP site; these read GDEGKGK and GHT. The Proton acceptor role is filled by Asp-13. Mg(2+) is bound by residues Asp-13 and Gly-40. IMP-binding positions include 13–16, 38–41, Thr-128, Arg-142, Gln-223, Thr-238, and Arg-302; these read DEGK and NAGH. His-41 (proton donor) is an active-site residue. Position 298–304 (298–304) interacts with substrate; the sequence is VNTGRKR. Residues Arg-304, 330–332, and 412–414 contribute to the GTP site; these read KLD and GVG.

The protein belongs to the adenylosuccinate synthetase family. In terms of assembly, homodimer. It depends on Mg(2+) as a cofactor.

The protein resides in the cytoplasm. The enzyme catalyses IMP + L-aspartate + GTP = N(6)-(1,2-dicarboxyethyl)-AMP + GDP + phosphate + 2 H(+). The protein operates within purine metabolism; AMP biosynthesis via de novo pathway; AMP from IMP: step 1/2. Plays an important role in the de novo pathway of purine nucleotide biosynthesis. Catalyzes the first committed step in the biosynthesis of AMP from IMP. The chain is Adenylosuccinate synthetase from Corynebacterium glutamicum (strain ATCC 13032 / DSM 20300 / JCM 1318 / BCRC 11384 / CCUG 27702 / LMG 3730 / NBRC 12168 / NCIMB 10025 / NRRL B-2784 / 534).